We begin with the raw amino-acid sequence, 291 residues long: Beta-lactamase CTX-M-6 (291 aa).

Residues 1 to 28 form the signal peptide; the sequence is MMTQSIRRSMLTVMATLPLLFSSATLHA. Ser-73 serves as the catalytic Acyl-ester intermediate. Residue 237–239 participates in substrate binding; sequence KTG.

Belongs to the class-A beta-lactamase family.

It catalyses the reaction a beta-lactam + H2O = a substituted beta-amino acid. Functionally, has cefotaxime-hydrolyzing activity. This is Beta-lactamase CTX-M-6 (bla) from Salmonella typhimurium.